A 154-amino-acid chain; its full sequence is Aspartate 1-decarboxylase 1 (154 aa).

Residue Ser26 is the Schiff-base intermediate with substrate; via pyruvic acid of the active site. Ser26 carries the pyruvic acid (Ser) modification. Thr58 contributes to the substrate binding site. The active-site Proton donor is the Tyr59. 74-76 (GAA) lines the substrate pocket. Positions 129 to 154 (VGLVRGDTNSPQPSLSEQAGDPRRAQ) are disordered. A compositionally biased stretch (polar residues) spans 135–145 (DTNSPQPSLSE).

It belongs to the PanD family. As to quaternary structure, heterooctamer of four alpha and four beta subunits. Pyruvate is required as a cofactor. In terms of processing, is synthesized initially as an inactive proenzyme, which is activated by self-cleavage at a specific serine bond to produce a beta-subunit with a hydroxyl group at its C-terminus and an alpha-subunit with a pyruvoyl group at its N-terminus.

It localises to the cytoplasm. The enzyme catalyses L-aspartate + H(+) = beta-alanine + CO2. Its pathway is cofactor biosynthesis; (R)-pantothenate biosynthesis; beta-alanine from L-aspartate: step 1/1. Its function is as follows. Catalyzes the pyruvoyl-dependent decarboxylation of aspartate to produce beta-alanine. This Frankia casuarinae (strain DSM 45818 / CECT 9043 / HFP020203 / CcI3) protein is Aspartate 1-decarboxylase 1.